Consider the following 242-residue polypeptide: DNA repair protein RecO (242 aa).

This sequence belongs to the RecO family. As to quaternary structure, monomer.

Involved in DNA repair and RecF pathway recombination. This Salmonella agona (strain SL483) protein is DNA repair protein RecO.